Here is a 324-residue protein sequence, read N- to C-terminus: Probable pectinesterase A (324 aa).

The first 19 residues, 1–19 (MHLPSLVLGLLGLGLTASA), serve as a signal peptide directing secretion. A glycan (N-linked (GlcNAc...) asparagine) is linked at asparagine 27. Position 142 (glutamine 142) interacts with substrate. The Proton donor role is filled by aspartate 165. The active-site Nucleophile is aspartate 186. N-linked (GlcNAc...) asparagine glycosylation occurs at asparagine 191. Substrate is bound by residues arginine 246 and tryptophan 248.

This sequence belongs to the pectinesterase family.

Its subcellular location is the secreted. It carries out the reaction [(1-&gt;4)-alpha-D-galacturonosyl methyl ester](n) + n H2O = [(1-&gt;4)-alpha-D-galacturonosyl](n) + n methanol + n H(+). It functions in the pathway glycan metabolism; pectin degradation; 2-dehydro-3-deoxy-D-gluconate from pectin: step 1/5. Functionally, involved in maceration and soft-rotting of plant tissue. The protein is Probable pectinesterase A (pmeA) of Neosartorya fischeri (strain ATCC 1020 / DSM 3700 / CBS 544.65 / FGSC A1164 / JCM 1740 / NRRL 181 / WB 181) (Aspergillus fischerianus).